Here is a 290-residue protein sequence, read N- to C-terminus: Putative neuropeptide Y receptor type 6 (290 aa).

Residues 1–39 (MEVSLNHPASNTTSTKNNNSAFFYFESCQPPSPALLLLC) lie on the Extracellular side of the membrane. Asn-11 is a glycosylation site (N-linked (GlcNAc...) asparagine). A helical transmembrane segment spans residues 40 to 60 (IAYTVVLIVGLFGNLSLIIII). Topologically, residues 61 to 83 (FKKQRKAQNFTSILIANLSLSDT) are cytoplasmic. Residues 84 to 104 (LVCVMCIHFTIIYTLMDHWIF) form a helical membrane-spanning segment. At 105–111 (GDTMCRL) the chain is on the extracellular side. Residues Cys-109 and Cys-196 are joined by a disulfide bond. A helical transmembrane segment spans residues 112–132 (TSYVQSVSISVSIFSLVFTAV). Topologically, residues 133 to 150 (ERYQLIVNPRGWKPSVTH) are cytoplasmic. The chain crosses the membrane as a helical span at residues 151–171 (AYWGITLIWLFSLLLSIPFFL). Residues 172-206 (SYHLTDEPFRNLSLPTDLYTHQVACVENWPSKKDR) lie on the Extracellular side of the membrane. A helical transmembrane segment spans residues 207 to 227 (LLFTTSLFLLQYFVPLGFILI). Over 228–258 (CYLKIVICLRRRNAKVDKKKENEGRLNENKR) the chain is Cytoplasmic. Residues 259-279 (INTMLISIVVTFGACWLPRIS) traverse the membrane as a helical segment. Residues 280 to 290 (SMSSLTGIMRC) are Extracellular-facing.

This sequence belongs to the G-protein coupled receptor 1 family. In terms of tissue distribution, expressed in heart, skeletal muscle, gastrointestinal tissues, spleen, brain and adrenal glands.

Its subcellular location is the membrane. When expressed, is unable to bind pancreatic polypeptide (PP), neuropeptide Y (NPY), or peptide YY (PYY), suggesting that either it is functionally inactive or that it may have acquired a pancreatic polypeptide-independent function. This Homo sapiens (Human) protein is Putative neuropeptide Y receptor type 6 (NPY6R).